The following is a 506-amino-acid chain: Glutamate--tRNA ligase (506 aa).

Residues 29–39 (PSPTGTPHVGL) carry the 'HIGH' region motif. A 'KMSKS' region motif is present at residues 273–277 (KLSKR). Residue K276 participates in ATP binding.

The protein belongs to the class-I aminoacyl-tRNA synthetase family. Glutamate--tRNA ligase type 1 subfamily. As to quaternary structure, monomer.

It is found in the cytoplasm. It catalyses the reaction tRNA(Glu) + L-glutamate + ATP = L-glutamyl-tRNA(Glu) + AMP + diphosphate. In terms of biological role, catalyzes the attachment of glutamate to tRNA(Glu) in a two-step reaction: glutamate is first activated by ATP to form Glu-AMP and then transferred to the acceptor end of tRNA(Glu). The polypeptide is Glutamate--tRNA ligase (Paenarthrobacter aurescens (strain TC1)).